The sequence spans 191 residues: Small ribosomal subunit protein uS7 (191 aa).

It belongs to the universal ribosomal protein uS7 family. As to quaternary structure, part of the 30S ribosomal subunit.

Functionally, one of the primary rRNA binding proteins, it binds directly to 16S rRNA where it nucleates assembly of the head domain of the 30S subunit. Is located at the subunit interface close to the decoding center. The polypeptide is Small ribosomal subunit protein uS7 (Methanocaldococcus jannaschii (strain ATCC 43067 / DSM 2661 / JAL-1 / JCM 10045 / NBRC 100440) (Methanococcus jannaschii)).